The primary structure comprises 355 residues: Probable aldo-keto reductase 3 (355 aa).

Residue tyrosine 70 is the Proton donor of the active site. Residue histidine 138 coordinates substrate. 217–227 (SPLGRGFFSSG) lines the NADP(+) pocket.

It belongs to the aldo/keto reductase family.

The sequence is that of Probable aldo-keto reductase 3 from Oryza sativa subsp. japonica (Rice).